Here is a 423-residue protein sequence, read N- to C-terminus: Transcription factor AP-2-epsilon (423 aa).

The disordered stretch occupies residues 1-108 (MLVHSYSSME…EDAGLLSQPH (108 aa)). Low complexity predominate over residues 14–27 (GLSSSSPGGRLSQL). The PPxY motif signature appears at 50 to 55 (YFPPPY). Low complexity predominate over residues 57–70 (QSSLSYSQSQDGGY). Residues 79–93 (SLNSLHQHQQAAWHS) show a composition bias toward polar residues. The segment at 276-405 (RRKAANVTLL…YLLEALKLLD (130 aa)) is H-S-H (helix-span-helix), dimerization.

Belongs to the AP-2 family. Binds DNA as a dimer. Can form homodimers or heterodimers with other AP-2 family members.

It localises to the nucleus. Its function is as follows. Sequence-specific DNA-binding protein that interacts with inducible viral and cellular enhancer elements to regulate transcription of selected genes. AP-2 factors bind to the consensus sequence 5'-GCCNNNGGC-3' and activate genes involved in a large spectrum of important biological functions. In Danio rerio (Zebrafish), this protein is Transcription factor AP-2-epsilon.